A 389-amino-acid polypeptide reads, in one-letter code: 8-amino-7-oxononanoate synthase (389 aa).

Arg-31 lines the substrate pocket. A pyridoxal 5'-phosphate-binding site is contributed by 109-110 (GY). His-134 provides a ligand contact to substrate. Residues Ser-180, 205-208 (DEAH), and 236-239 (TLSK) contribute to the pyridoxal 5'-phosphate site. Position 239 is an N6-(pyridoxal phosphate)lysine (Lys-239). Thr-349 provides a ligand contact to substrate.

Belongs to the class-II pyridoxal-phosphate-dependent aminotransferase family. BioF subfamily. Homodimer. Pyridoxal 5'-phosphate is required as a cofactor.

The catalysed reaction is 6-carboxyhexanoyl-[ACP] + L-alanine + H(+) = (8S)-8-amino-7-oxononanoate + holo-[ACP] + CO2. Its pathway is cofactor biosynthesis; biotin biosynthesis. Functionally, catalyzes the decarboxylative condensation of pimeloyl-[acyl-carrier protein] and L-alanine to produce 8-amino-7-oxononanoate (AON), [acyl-carrier protein], and carbon dioxide. The protein is 8-amino-7-oxononanoate synthase of Mycobacterium marinum (strain ATCC BAA-535 / M).